The primary structure comprises 434 residues: Alpha-enolase (434 aa).

S2 carries the post-translational modification N-acetylserine. S40 is a binding site for Mg(2+). Y44 is subject to Phosphotyrosine. N6-acetyllysine; alternate is present on K60. K60 is modified (N6-succinyllysine; alternate). K71 is subject to N6-acetyllysine. K89 is subject to N6-acetyllysine; alternate. N6-succinyllysine; alternate is present on K89. K92 and K126 each carry N6-acetyllysine. Positions 158 and 167 each coordinate substrate. K193 and K199 each carry N6-acetyllysine. K202 carries the post-translational modification N6-acetyllysine; alternate. Residue K202 forms a Glycyl lysine isopeptide (Lys-Gly) (interchain with G-Cter in SUMO2); alternate linkage. Catalysis depends on E210, which acts as the Proton donor. N6-acetyllysine; alternate occurs at positions 228 and 233. K228 is modified (N6-succinyllysine; alternate). Residue K228 is modified to N6-(2-hydroxyisobutyryl)lysine; alternate. The residue at position 233 (K233) is an N6-malonyllysine; alternate. D245 is a binding site for Mg(2+). Residue S254 is modified to Phosphoserine. The residue at position 256 (K256) is an N6-acetyllysine. S263 is subject to Phosphoserine. K281 is subject to N6-acetyllysine; alternate. Position 281 is an N6-(2-hydroxyisobutyryl)lysine; alternate (K281). Y287 carries the post-translational modification Phosphotyrosine. S291 carries the phosphoserine modification. E293 and D318 together coordinate Mg(2+). Residues E293 and D318 each coordinate substrate. N6-acetyllysine occurs at positions 335 and 343. The active-site Proton acceptor is K343. Residues 370–373 (SHRS) and K394 each bind substrate. A required for interaction with PLG region spans residues 405–434 (AKYNQILRIEEELGSKAKFAGRSFRNPLAK). Position 406 is an N6-acetyllysine (K406). K420 bears the N6-acetyllysine; alternate mark. K420 carries the post-translational modification N6-succinyllysine; alternate. Residue K420 is modified to N6-malonyllysine; alternate.

Belongs to the enolase family. Mammalian enolase is composed of 3 isozyme subunits, alpha, beta and gamma, which can form homodimers or heterodimers which are cell-type and development-specific. ENO1 interacts with PLG in the neuronal plasma membrane and promotes its activation. The C-terminal lysine is required for this binding. In vitro, interacts with several glycolytic enzymes including PKM, PGM, CKM and aldolase. Also binds troponin, in vitro. Interacts with ENO4 and PGAM2. Interacts with CMTM6. Requires Mg(2+) as cofactor. ISGylated. In terms of processing, lysine 2-hydroxyisobutyrylation (Khib) by p300/EP300 activates the phosphopyruvate hydratase activity. As to expression, testis. Found in the principal piece of sperm tail (at protein level). The alpha/alpha homodimer is expressed in embryo and in most adult tissues. The alpha/beta heterodimer and the beta/beta homodimer are found in striated muscle, and the alpha/gamma heterodimer and the gamma/gamma homodimer in neurons. In striated muscle, expression of ENO1 appears to be independent of fiber type.

It is found in the cytoplasm. The protein localises to the cell membrane. It catalyses the reaction (2R)-2-phosphoglycerate = phosphoenolpyruvate + H2O. The protein operates within carbohydrate degradation; glycolysis; pyruvate from D-glyceraldehyde 3-phosphate: step 4/5. Functionally, glycolytic enzyme the catalyzes the conversion of 2-phosphoglycerate to phosphoenolpyruvate. In addition to glycolysis, involved in various processes such as growth control, hypoxia tolerance and allergic responses. May also function in the intravascular and pericellular fibrinolytic system due to its ability to serve as a receptor and activator of plasminogen on the cell surface of several cell-types such as leukocytes and neurons. Stimulates immunoglobulin production. The sequence is that of Alpha-enolase (Eno1) from Mus musculus (Mouse).